A 364-amino-acid chain; its full sequence is Probable mannose-1-phosphate guanylyltransferase 2 (364 aa).

GDP-alpha-D-mannose is bound by residues Leu6 and Val7. 5 residues coordinate diphosphate: Gly9, Gly11, Thr12, Arg13, and Lys23. Gly88, Asn112, Asp114, Gly149, and Asn176 together coordinate GDP-alpha-D-mannose.

This sequence belongs to the transferase hexapeptide repeat family.

The catalysed reaction is alpha-D-mannose 1-phosphate + GTP + H(+) = GDP-alpha-D-mannose + diphosphate. It functions in the pathway nucleotide-sugar biosynthesis; GDP-alpha-D-mannose biosynthesis; GDP-alpha-D-mannose from alpha-D-mannose 1-phosphate (GTP route): step 1/1. Its function is as follows. Catalyzes a reaction of the Smirnoff-Wheeler pathway, the major route to ascorbate biosynthesis in plants. This chain is Probable mannose-1-phosphate guanylyltransferase 2, found in Arabidopsis thaliana (Mouse-ear cress).